Here is a 378-residue protein sequence, read N- to C-terminus: Flap endonuclease 1 (378 aa).

The interval 1–105 is N-domain; it reads MGIKGLNSII…HELDKRTERR (105 aa). Asp34 contributes to the Mg(2+) binding site. DNA-binding residues include Arg47 and Arg71. 5 residues coordinate Mg(2+): Asp87, Glu156, Glu158, Asp177, and Asp179. Positions 120 to 251 are I-domain; it reads EIMKHERRLV…VTALKLIKEH (132 aa). DNA is bound at residue Glu156. Residues Gly229 and Asp231 each contribute to the DNA site. Asp231 lines the Mg(2+) pocket. The interval 337 to 345 is interaction with PCNA; the sequence is VQGRLDSFF. Positions 356–367 are enriched in low complexity; that stretch reads AASARKAQAAKK. A disordered region spans residues 356–378; that stretch reads AASARKAQAAKKTNQKGKVLKRR. Residues 368 to 378 show a composition bias toward basic residues; the sequence is TNQKGKVLKRR.

It belongs to the XPG/RAD2 endonuclease family. FEN1 subfamily. In terms of assembly, interacts with PCNA. Three molecules of FEN1 bind to one PCNA trimer with each molecule binding to one PCNA monomer. PCNA stimulates the nuclease activity without altering cleavage specificity. The cofactor is Mg(2+). Phosphorylated. Phosphorylation upon DNA damage induces relocalization to the nuclear plasma.

The protein resides in the nucleus. It localises to the nucleolus. Its subcellular location is the nucleoplasm. The protein localises to the mitochondrion. Functionally, structure-specific nuclease with 5'-flap endonuclease and 5'-3' exonuclease activities involved in DNA replication and repair. During DNA replication, cleaves the 5'-overhanging flap structure that is generated by displacement synthesis when DNA polymerase encounters the 5'-end of a downstream Okazaki fragment. It enters the flap from the 5'-end and then tracks to cleave the flap base, leaving a nick for ligation. Also involved in the long patch base excision repair (LP-BER) pathway, by cleaving within the apurinic/apyrimidinic (AP) site-terminated flap. Acts as a genome stabilization factor that prevents flaps from equilibrating into structures that lead to duplications and deletions. Also possesses 5'-3' exonuclease activity on nicked or gapped double-stranded DNA, and exhibits RNase H activity. Also involved in replication and repair of rDNA and in repairing mitochondrial DNA. This chain is Flap endonuclease 1, found in Eremothecium gossypii (strain ATCC 10895 / CBS 109.51 / FGSC 9923 / NRRL Y-1056) (Yeast).